Consider the following 124-residue polypeptide: Small ribosomal subunit protein uS12 (124 aa).

Positions 1-32 are disordered; sequence MPTIQQLVRKGRQAKASKTKTPALKGSPQRRG. The segment covering 9 to 18 has biased composition (basic residues); the sequence is RKGRQAKASK. 3-methylthioaspartic acid is present on aspartate 89.

Belongs to the universal ribosomal protein uS12 family. Part of the 30S ribosomal subunit. Contacts proteins S8 and S17. May interact with IF1 in the 30S initiation complex.

Its function is as follows. With S4 and S5 plays an important role in translational accuracy. Functionally, interacts with and stabilizes bases of the 16S rRNA that are involved in tRNA selection in the A site and with the mRNA backbone. Located at the interface of the 30S and 50S subunits, it traverses the body of the 30S subunit contacting proteins on the other side and probably holding the rRNA structure together. The combined cluster of proteins S8, S12 and S17 appears to hold together the shoulder and platform of the 30S subunit. This Acidothermus cellulolyticus (strain ATCC 43068 / DSM 8971 / 11B) protein is Small ribosomal subunit protein uS12.